The following is a 28-amino-acid chain: Kappa-stichotoxin-Shd1a/kappa-stichotoxin-Shd1b (28 aa).

The residue at position 6 (Pro6) is a 4-hydroxyproline; in form SHTX-1 (Shd1a). 2 disulfides stabilise this stretch: Cys7-Cys19 and Cys10-Cys25.

It belongs to the sea anemone BBH family. Occurs in 2 forms which differ in the post-translational modification of Pro-6. In form SHTX-1 (Shd1a) Pro-6 is a hydroxyproline while in form SHTX-2 (Shd1b) Pro-6 is unmodified.

Its subcellular location is the secreted. The protein localises to the nematocyst. Kappa-stichotoxin-Shd1a: inhibits voltage-gated potassium channels (Kv). In terms of biological role, kappa-stichotoxin-Shd1b: inhibits voltage-gated potassium channels (Kv). This toxin inhibits the binding of 125I-alpha-dendrotoxin to synaptosomal membranes (IC(50)=270 nM). This chain is Kappa-stichotoxin-Shd1a/kappa-stichotoxin-Shd1b, found in Stichodactyla haddoni (Saddle carpet anemone).